The sequence spans 246 residues: uncharacterized protein (246 aa).

It to M.jannaschii MJ1676.

This is an uncharacterized protein from Methanothermobacter thermautotrophicus (strain ATCC 29096 / DSM 1053 / JCM 10044 / NBRC 100330 / Delta H) (Methanobacterium thermoautotrophicum).